Consider the following 584-residue polypeptide: Arginine--tRNA ligase (584 aa).

The 'HIGH' region motif lies at 130–140 (PNVAKEMHVGH).

The protein belongs to the class-I aminoacyl-tRNA synthetase family. In terms of assembly, monomer.

The protein resides in the cytoplasm. It carries out the reaction tRNA(Arg) + L-arginine + ATP = L-arginyl-tRNA(Arg) + AMP + diphosphate. The polypeptide is Arginine--tRNA ligase (Protochlamydia amoebophila (strain UWE25)).